A 566-amino-acid polypeptide reads, in one-letter code: Lactase-like protein (566 aa).

An N-terminal signal peptide occupies residues 1 to 20 (MKPVWVIILGWILLVPRVGT). The Extracellular portion of the chain corresponds to 21–540 (AWRGPPEEAS…LLRHMHVASE (520 aa)). Asn170 and Asn244 each carry an N-linked (GlcNAc...) asparagine glycan. The helical transmembrane segment at 541-561 (IVVPTVCALSILTAALMLTLL) threads the bilayer. Topologically, residues 562–566 (LRRRG) are cytoplasmic.

Belongs to the glycosyl hydrolase 1 family. Klotho subfamily. May form dimers. In terms of tissue distribution, strongly expressed in the lens of the eye, where it localizes to the equatorial epithelium and outer layers of newly extending fiber cells (at protein level). May also be expressed in kidney and skin. However, another study suggests that expression is specific to eye and is minimal in other tissues.

It is found in the endoplasmic reticulum membrane. Its function is as follows. Plays a role in formation of the lens suture in the eye, which is important for normal optical properties of the lens. The polypeptide is Lactase-like protein (Lctl) (Mus musculus (Mouse)).